The following is a 314-amino-acid chain: L-lactate dehydrogenase 2 (314 aa).

NAD(+) contacts are provided by residues Val16, Asp37, Lys42, Tyr68, and 82-83; that span reads GV. Residues Gln85 and Arg91 each contribute to the substrate site. Residues Ser104, 121–123, and Thr146 contribute to the NAD(+) site; that span reads ASN. 123-126 lines the substrate pocket; the sequence is NPVD. 151-154 provides a ligand contact to substrate; that stretch reads DTTR. Beta-D-fructose 1,6-bisphosphate is bound by residues Arg156 and His171. The active-site Proton acceptor is the His178. At Tyr223 the chain carries Phosphotyrosine. Residue Thr232 participates in substrate binding.

The protein belongs to the LDH/MDH superfamily. LDH family. Homotetramer.

The protein localises to the cytoplasm. The enzyme catalyses (S)-lactate + NAD(+) = pyruvate + NADH + H(+). The protein operates within fermentation; pyruvate fermentation to lactate; (S)-lactate from pyruvate: step 1/1. Allosterically activated by fructose 1,6-bisphosphate (FBP). In terms of biological role, catalyzes the conversion of lactate to pyruvate. The chain is L-lactate dehydrogenase 2 from Lactococcus lactis subsp. lactis (strain IL1403) (Streptococcus lactis).